A 194-amino-acid chain; its full sequence is Archaetidylinositol phosphate synthase (194 aa).

Transmembrane regions (helical) follow at residues 32–51 and 58–78; these read IYTL…WLYI and LLIA…RFTG. 4 residues coordinate Mg(2+): D67, D70, D88, and D92. The active-site Proton acceptor is D92. The next 3 helical transmembrane spans lie at 103–123, 150–170, and 172–192; these read LYIA…GLIV, IAIL…LALA, and AAAV…AGEL.

The protein belongs to the CDP-alcohol phosphatidyltransferase class-I family. Mn(2+) serves as cofactor. It depends on Mg(2+) as a cofactor.

The protein resides in the cell membrane. It catalyses the reaction CDP-2,3-bis-O-(phytanyl)-sn-glycerol + 1D-myo-inositol 3-phosphate = saturated 1-archaetidyl-1D-myo-inositol 3-phosphate + CMP + H(+). It functions in the pathway lipid metabolism; phospholipid metabolism. In terms of biological role, catalyzes the formation of archaetidylinositol phosphate (AIP) from CDP-archaeol (CDP-ArOH or CDP-2,3-bis-(O-phytanyl)-sn-glycerol) and 1L-myo-inositol 1-phosphate (IP or 1D-myo-inositol 3-phosphate). AIP is a precursor of archaetidyl-myo-inositol (AI), an ether-type inositol phospholipid ubiquitously distributed in archaea membranes and essential for glycolipid biosynthesis in archaea. The polypeptide is Archaetidylinositol phosphate synthase (Aeropyrum pernix (strain ATCC 700893 / DSM 11879 / JCM 9820 / NBRC 100138 / K1)).